A 298-amino-acid polypeptide reads, in one-letter code: GTPase Era (298 aa).

Positions His-8–Glu-176 constitute an Era-type G domain. The tract at residues Gly-16–Ser-23 is G1. Gly-16–Ser-23 lines the GTP pocket. Residues Gln-42 to His-46 are G2. A G3 region spans residues Asp-63–Gly-66. GTP-binding positions include Asp-63–Leu-67 and Asn-125–Asp-128. The tract at residues Asn-125–Asp-128 is G4. The tract at residues Ile-155–Ala-157 is G5. A KH type-2 domain is found at Val-199 to Glu-283.

Belongs to the TRAFAC class TrmE-Era-EngA-EngB-Septin-like GTPase superfamily. Era GTPase family. In terms of assembly, monomer.

The protein localises to the cytoplasm. Its subcellular location is the cell inner membrane. In terms of biological role, an essential GTPase that binds both GDP and GTP, with rapid nucleotide exchange. Plays a role in 16S rRNA processing and 30S ribosomal subunit biogenesis and possibly also in cell cycle regulation and energy metabolism. This is GTPase Era from Stenotrophomonas maltophilia (strain R551-3).